The sequence spans 510 residues: Maturase K (510 aa).

Belongs to the intron maturase 2 family. MatK subfamily.

Its subcellular location is the plastid. The protein resides in the chloroplast. In terms of biological role, usually encoded in the trnK tRNA gene intron. Probably assists in splicing its own and other chloroplast group II introns. In Gratiola officinalis (Hedgehyssop), this protein is Maturase K.